Here is a 569-residue protein sequence, read N- to C-terminus: Proton-coupled zinc antiporter SLC30A9, mitochondrial (569 aa).

The transit peptide at 1–68 (MLPGLAAAAA…IGTLSQVKLY (68 aa)) directs the protein to the mitochondrion. 5 helical membrane passes run 240 to 260 (VVMV…LAWI), 315 to 335 (GVGI…MGLL), 343 to 363 (LLWA…TLLV), 393 to 413 (VILL…TCMG), and 425 to 445 (SLGS…LIYT). An LXXLL motif motif is present at residues 463–467 (LTELL).

It belongs to the cation diffusion facilitator (CDF) transporter (TC 2.A.4) family. SLC30A subfamily. As to quaternary structure, interacts with GRIP1, ESR1, AR and CTNNB1.

It is found in the mitochondrion membrane. The protein localises to the nucleus. The protein resides in the endoplasmic reticulum. It catalyses the reaction Zn(2+)(in) + 2 H(+)(out) = Zn(2+)(out) + 2 H(+)(in). Functionally, mitochondrial proton-coupled zinc ion antiporter mediating the export of zinc from the mitochondria and involved in zinc homeostasis, zinc mobilization as well as mitochondrial morphology and health. In nucleus, functions as a secondary coactivator for nuclear receptors by cooperating with p160 coactivators subtypes. Plays a role in transcriptional activation of Wnt-responsive genes. This chain is Proton-coupled zinc antiporter SLC30A9, mitochondrial (SLC30A9), found in Pongo abelii (Sumatran orangutan).